A 167-amino-acid chain; its full sequence is Probable host range protein 2 (167 aa).

It belongs to the poxviridae C7 protein family.

In terms of biological role, plays a role for multiplication of the virus in different cell types. The chain is Probable host range protein 2 from Yaba monkey tumor virus (strain VR587) (YMTV).